The sequence spans 350 residues: Induced myeloid leukemia cell differentiation protein Mcl-1 homolog (350 aa).

K5 participates in a covalent cross-link: Glycyl lysine isopeptide (Lys-Gly) (interchain with G-Cter in ubiquitin). Residues A23 to R95 form a disordered region. Low complexity predominate over residues S31–E41. A compositionally biased stretch (gly residues) spans G50 to A61. The PEST-like stretch occupies residues R104 to Y175. Residue S121 is modified to Phosphoserine. K136 participates in a covalent cross-link: Glycyl lysine isopeptide (Lys-Gly) (interchain with G-Cter in ubiquitin). Positions A150–E169 are disordered. S159 is modified (phosphoserine; by GSK3-alpha and GSK3-beta). S162 bears the Phosphoserine mark. At T163 the chain carries Phosphothreonine. Glycyl lysine isopeptide (Lys-Gly) (interchain with G-Cter in ubiquitin) cross-links involve residues K194 and K197. The short motif at A209–N223 is the BH3 element. The short motif at H252 to A272 is the BH1 element. A BH2 motif is present at residues D304 to F319. The helical transmembrane segment at G327–I349 threads the bilayer.

It belongs to the Bcl-2 family. As to quaternary structure, interacts with HIF3A (via C-terminus domain). Interacts with BOK, BIK, BAX, BAK1, and TPT1. Interacts with unphosphorylated BAD. Interacts with BMF, BBC3 and PMAIP1. Interacts with BOP. Interacts with BCL2L11; may sequester BCL2L11 to prevent its pro-apoptotic activity. Interacts with GIMAP5 and HSPA8/HSC70; the interaction between HSPA8 and MCL1 is impaired in the absence of GIMAP5. Post-translationally, cleaved by CASP3 during apoptosis, yielding a pro-apoptotic C-terminal fragment. Rapidly degraded in the absence of phosphorylation in the PEST region. In terms of processing, phosphorylated on Ser-159, by GSK3, in response to IL3/interleukin-3 withdrawal. Phosphorylation at Ser-159 induces ubiquitination and proteasomal degradation, abrogating the anti-apoptotic activity. Treatment with taxol or okadaic acid induces phosphorylation on additional sites. Post-translationally, ubiquitinated. Ubiquitination is induced by phosphorylation at Ser-159. Deubiquitinated by USP20; leading to increased stability. As to expression, detected in peripheral blood mononuclear cells and bone marrow.

It is found in the membrane. It localises to the cytoplasm. The protein resides in the mitochondrion. Its subcellular location is the nucleus. The protein localises to the nucleoplasm. In terms of biological role, involved in the regulation of apoptosis versus cell survival, and in the maintenance of viability but not of proliferation. Mediates its effects by interactions with a number of other regulators of apoptosis. This is Induced myeloid leukemia cell differentiation protein Mcl-1 homolog (MCL1) from Canis lupus familiaris (Dog).